A 212-amino-acid polypeptide reads, in one-letter code: Probable transaldolase (212 aa).

Catalysis depends on K83, which acts as the Schiff-base intermediate with substrate.

The protein belongs to the transaldolase family. Type 3B subfamily.

Its subcellular location is the cytoplasm. It carries out the reaction D-sedoheptulose 7-phosphate + D-glyceraldehyde 3-phosphate = D-erythrose 4-phosphate + beta-D-fructose 6-phosphate. Its pathway is carbohydrate degradation; pentose phosphate pathway; D-glyceraldehyde 3-phosphate and beta-D-fructose 6-phosphate from D-ribose 5-phosphate and D-xylulose 5-phosphate (non-oxidative stage): step 2/3. Functionally, transaldolase is important for the balance of metabolites in the pentose-phosphate pathway. The protein is Probable transaldolase (tal) of Halalkalibacterium halodurans (strain ATCC BAA-125 / DSM 18197 / FERM 7344 / JCM 9153 / C-125) (Bacillus halodurans).